We begin with the raw amino-acid sequence, 361 residues long: dTDP-glucose 4,6-dehydratase (361 aa).

NAD(+)-binding positions include 11-12 (FI), 32-35 (DKLT), 58-59 (DI), 80-84 (LAAES), and Thr-99. Ser-84 contributes to the substrate binding site. Thr-133 is a substrate binding site. Catalysis depends on Asp-134, which acts as the Proton donor. Residues Glu-135 and Tyr-167 each act as proton acceptor in the active site. 167–171 (YSASK) lines the NAD(+) pocket. Position 196 (Asn-196) interacts with substrate. Asn-197 is an NAD(+) binding site. Residues 206-207 (KL), 222-224 (PIY), Arg-231, Asn-266, and 296-300 (DRPGH) contribute to the substrate site.

Belongs to the NAD(P)-dependent epimerase/dehydratase family. dTDP-glucose dehydratase subfamily. Homodimer. Requires NAD(+) as cofactor.

It catalyses the reaction dTDP-alpha-D-glucose = dTDP-4-dehydro-6-deoxy-alpha-D-glucose + H2O. Its pathway is carbohydrate biosynthesis; dTDP-L-rhamnose biosynthesis. The protein operates within bacterial outer membrane biogenesis; LPS O-antigen biosynthesis. Its function is as follows. Catalyzes the dehydration of dTDP-D-glucose to form dTDP-6-deoxy-D-xylo-4-hexulose via a three-step process involving oxidation, dehydration and reduction. The sequence is that of dTDP-glucose 4,6-dehydratase (rfbB) from Escherichia coli.